The primary structure comprises 255 residues: Aliphatic sulfonates import ATP-binding protein SsuB (255 aa).

In terms of domain architecture, ABC transporter spans 12–233 (LLLNAVSKHY…RLGSVRLAEL (222 aa)). 44-51 (GRSGGGKS) is an ATP binding site.

The protein belongs to the ABC transporter superfamily. Aliphatic sulfonates importer (TC 3.A.1.17.2) family. In terms of assembly, the complex is composed of two ATP-binding proteins (SsuB), two transmembrane proteins (SsuC) and a solute-binding protein (SsuA).

It localises to the cell inner membrane. The enzyme catalyses ATP + H2O + aliphatic sulfonate-[sulfonate-binding protein]Side 1 = ADP + phosphate + aliphatic sulfonateSide 2 + [sulfonate-binding protein]Side 1.. In terms of biological role, part of the ABC transporter complex SsuABC involved in aliphatic sulfonates import. Responsible for energy coupling to the transport system. In Shigella sonnei (strain Ss046), this protein is Aliphatic sulfonates import ATP-binding protein SsuB.